Here is a 100-residue protein sequence, read N- to C-terminus: Urease subunit gamma (100 aa).

This sequence belongs to the urease gamma subunit family. Heterotrimer of UreA (gamma), UreB (beta) and UreC (alpha) subunits. Three heterotrimers associate to form the active enzyme.

It is found in the cytoplasm. It carries out the reaction urea + 2 H2O + H(+) = hydrogencarbonate + 2 NH4(+). The protein operates within nitrogen metabolism; urea degradation; CO(2) and NH(3) from urea (urease route): step 1/1. The polypeptide is Urease subunit gamma (Bradyrhizobium diazoefficiens (strain JCM 10833 / BCRC 13528 / IAM 13628 / NBRC 14792 / USDA 110)).